The sequence spans 47 residues: Large ribosomal subunit protein bL34 (47 aa).

Belongs to the bacterial ribosomal protein bL34 family.

This is Large ribosomal subunit protein bL34 from Mycobacterium tuberculosis (strain ATCC 25177 / H37Ra).